The primary structure comprises 249 residues: tRNA pseudouridine synthase A (249 aa).

D52 functions as the Nucleophile in the catalytic mechanism. Y110 contacts substrate.

It belongs to the tRNA pseudouridine synthase TruA family. Homodimer.

It carries out the reaction uridine(38/39/40) in tRNA = pseudouridine(38/39/40) in tRNA. Formation of pseudouridine at positions 38, 39 and 40 in the anticodon stem and loop of transfer RNAs. This chain is tRNA pseudouridine synthase A, found in Exiguobacterium sibiricum (strain DSM 17290 / CCUG 55495 / CIP 109462 / JCM 13490 / 255-15).